The following is a 328-amino-acid chain: Reticulocalbin-3 (328 aa).

Residues 1-20 (MMWRPSVLLLLLLLRHGAQG) form the signal peptide. The segment at 19–49 (QGKPSPDAGPHGQGRVHQAAPLSDAPHDDAH) is disordered. 6 EF-hand domains span residues 75-112 (ESQARLGRIVDRMDRAGDGDGWVSLAELRAWIAHTQQR), 113-148 (HIRDSVSAAWDTYDTDRDGRVGWEELRNATYGHYAP), 163-198 (KMLARDERRFRVADQDGDSMATREELTAFLHPEEFP), 200-235 (MRDIVIAETLEDLDRNKDGYVQVEEYIADLYSAEPG), 241-276 (WVQTERQQFRDFRDLNKDGHLDGSEVGHWVLPPAQD), and 277-312 (QPLVEANHLLHESDTDKDGRLSKAEILGNWNMFVGS). Residues Asp-92, Asp-94, Trp-96, Glu-101, Asp-126, Asp-128, Asp-130, Arg-132, and Glu-137 each coordinate Ca(2+). N-linked (GlcNAc...) asparagine glycosylation occurs at Asn-140. Positions 176, 178, 180, 182, 187, 213, 215, 217, 219, 224, 254, 256, 258, 260, 265, 290, 292, 294, 296, and 301 each coordinate Ca(2+). The Prevents secretion from ER motif lies at 325-328 (HDEL).

It belongs to the CREC family. Interacts with PCSK6 (immature form including the propeptide); probably involved in the maturation and the secretion of PCSK6. In terms of processing, degraded by PCSK6 and other endoproteases including FURIN and PCSK5. Post-translationally, N-glycosylated. Widely expressed.

It is found in the endoplasmic reticulum lumen. Its function is as follows. Probable molecular chaperone assisting protein biosynthesis and transport in the endoplasmic reticulum. Required for the proper biosynthesis and transport of pulmonary surfactant-associated protein A/SP-A, pulmonary surfactant-associated protein D/SP-D and the lipid transporter ABCA3. By regulating both the proper expression and the degradation through the endoplasmic reticulum-associated protein degradation pathway of these proteins plays a crucial role in pulmonary surfactant homeostasis. Has an anti-fibrotic activity by negatively regulating the secretion of type I and type III collagens. This calcium-binding protein also transiently associates with immature PCSK6 and regulates its secretion. This chain is Reticulocalbin-3, found in Homo sapiens (Human).